Here is a 179-residue protein sequence, read N- to C-terminus: ATP synthase subunit delta (179 aa).

This sequence belongs to the ATPase delta chain family. F-type ATPases have 2 components, F(1) - the catalytic core - and F(0) - the membrane proton channel. F(1) has five subunits: alpha(3), beta(3), gamma(1), delta(1), epsilon(1). F(0) has three main subunits: a(1), b(2) and c(10-14). The alpha and beta chains form an alternating ring which encloses part of the gamma chain. F(1) is attached to F(0) by a central stalk formed by the gamma and epsilon chains, while a peripheral stalk is formed by the delta and b chains.

The protein localises to the cell inner membrane. F(1)F(0) ATP synthase produces ATP from ADP in the presence of a proton or sodium gradient. F-type ATPases consist of two structural domains, F(1) containing the extramembraneous catalytic core and F(0) containing the membrane proton channel, linked together by a central stalk and a peripheral stalk. During catalysis, ATP synthesis in the catalytic domain of F(1) is coupled via a rotary mechanism of the central stalk subunits to proton translocation. Its function is as follows. This protein is part of the stalk that links CF(0) to CF(1). It either transmits conformational changes from CF(0) to CF(1) or is implicated in proton conduction. This is ATP synthase subunit delta from Anaeromyxobacter sp. (strain Fw109-5).